Here is a 213-residue protein sequence, read N- to C-terminus: Peptidoglycan-N-acetylglucosamine deacetylase BC_3618 (213 aa).

Positions 22-203 (KIIAITFDDG…ELKKQGYRFV (182 aa)) constitute a NodB homology domain. Asp29 (proton acceptor) is an active-site residue. The Zn(2+) site is built by Asp30, His80, and His84. His175 (proton donor) is an active-site residue.

This sequence belongs to the polysaccharide deacetylase family. Zn(2+) is required as a cofactor.

It catalyses the reaction peptidoglycan-N-acetyl-D-glucosamine + H2O = peptidoglycan-D-glucosamine + acetate.. With respect to regulation, inhibited by CuCl(2) and ZnCl(2). Its function is as follows. Catalyzes the deacetylation of N-acetylglucosamine (GlcNAc) residues in peptidoglycan. Also acts on soluble chitin substrates and N-acetylchitooligomers. Acts on cell wall peptidoglycan from the Gram-positive bacteria B.cereus and B.subtilis and the Gram-negative bacterium H.pylori. Not active on acetylated xylan. The protein is Peptidoglycan-N-acetylglucosamine deacetylase BC_3618 of Bacillus cereus (strain ATCC 14579 / DSM 31 / CCUG 7414 / JCM 2152 / NBRC 15305 / NCIMB 9373 / NCTC 2599 / NRRL B-3711).